We begin with the raw amino-acid sequence, 615 residues long: Translation initiation factor IF-2 (615 aa).

The tr-type G domain maps to 118–285 (KRPPIVTVMG…AILTLAEINE (168 aa)). Positions 127-134 (GHVDHGKT) are G1. 127–134 (GHVDHGKT) serves as a coordination point for GTP. The interval 152-156 (GITQH) is G2. A G3 region spans residues 173–176 (DTPG). GTP contacts are provided by residues 173–177 (DTPGH) and 227–230 (NKMD). A G4 region spans residues 227-230 (NKMD). The G5 stretch occupies residues 263-265 (SAI).

This sequence belongs to the TRAFAC class translation factor GTPase superfamily. Classic translation factor GTPase family. IF-2 subfamily.

The protein resides in the cytoplasm. Its function is as follows. One of the essential components for the initiation of protein synthesis. Protects formylmethionyl-tRNA from spontaneous hydrolysis and promotes its binding to the 30S ribosomal subunits. Also involved in the hydrolysis of GTP during the formation of the 70S ribosomal complex. The polypeptide is Translation initiation factor IF-2 (Mycoplasmoides gallisepticum (strain R(low / passage 15 / clone 2)) (Mycoplasma gallisepticum)).